The sequence spans 886 residues: MEIKEEYSIELEKKVQEKWEDEKTFKFLDDEKRPPYIIDTPPPYPTGRMHLGHGLNWTYMDIIARFKRMNGYDVLFPQGWDCHGLPTEVKVEELNNITKSDIDRHEFRRLCVELTDENVEKMRGQVRSLGISIDWDREYITMNPDYVRKSQTAFLKMYEKGLIYRGKHPVNWCPRCETAIAFAEVEYQGRTSKLNYIKFPYAENSGKYLEIATSRPELMAACVGIVVHPEDERYSDVVGKTVKVPLFDQEVNVYPDSDVEKEFGTGVVMVCTFGDKTDVTWVNRHKLEVKKAINEKGQLTEICGKYAGKKSDDARKEIISDLISENYMIKQEPLEQNVGSCWRCKTPIEIIVGDQWFVNVTKLLTEVENAANEISWVPEHMKARLMKWIEDMGWDWCISRQRLFATPIPVWYCKDCGEIIVAKPEDLPIDPTKESPYTCKCGNSNLVAETDVLDTWMDSSITPLVIAGWLEDEEFFKKHYPVQLRPQGHDIIRTWAFYTMVRSLAITGEKPWDEIVINGMVFGEDGFKMSKSRGNVVEPGEITKTYGADALRLWASNSTIGKDVPFAWKEVEYGGRFLRKIWNACKFAKMNISDETISELKSLNSISIENPVDLWILSKLNNLISKVSDDLGNYKINTVVEIQKFLWHEFCDNYIEMVKHRLYNKEESESAQQEKLMAQYTLYKVITESVKLLTPFTPHFAEIVGEIYEIDDLHTSWPVSDERLISLENEFVGEVVKNTVASIRRYKSNKGMPLNAELNKVEMYVSDEKDFNAVSKASEDVKKSLKIKELEINLGKPSLEQKISEVTPNKSKIGPEFKKDAGKVMAFIKEADADTIEKMLSEGIETEFGILNKEHIKEVKRAIYNKGEIVETADIDSLIDTIAIIQ.

The 'HIGH' region signature appears at 43–53; that stretch reads PYPTGRMHLGH. The 'KMSKS' region motif lies at 528-532; that stretch reads KMSKS. Lys-531 is a binding site for ATP.

This sequence belongs to the class-I aminoacyl-tRNA synthetase family. ValS type 2 subfamily.

The protein resides in the cytoplasm. It catalyses the reaction tRNA(Val) + L-valine + ATP = L-valyl-tRNA(Val) + AMP + diphosphate. Its function is as follows. Catalyzes the attachment of valine to tRNA(Val). As ValRS can inadvertently accommodate and process structurally similar amino acids such as threonine, to avoid such errors, it has a 'posttransfer' editing activity that hydrolyzes mischarged Thr-tRNA(Val) in a tRNA-dependent manner. This Methanococcus maripaludis (strain DSM 14266 / JCM 13030 / NBRC 101832 / S2 / LL) protein is Valine--tRNA ligase.